We begin with the raw amino-acid sequence, 463 residues long: Cis-zeatin O-glucosyltransferase 2 (463 aa).

H21 serves as the catalytic Proton acceptor. The an anthocyanidin site is built by H21 and N91. D127 acts as the Charge relay in catalysis. A339, Q341, H356, W359, N360, S361, E364, D380, and Q381 together coordinate UDP-alpha-D-glucose.

Belongs to the UDP-glycosyltransferase family. As to expression, highly expressed in root. Expressed at much lower level in kernel. Weakly or not expressed in expressed in stems and leaves.

It catalyses the reaction cis-zeatin + UDP-alpha-D-glucose = O-beta-D-glucosyl-cis-zeatin + UDP + H(+). In terms of biological role, utilizes UDP-glucose as the sugar donor and catalyzes the formation of O-beta-D-glucosyl-cis-zeatin from cis-zeatin. May regulate active versus storage forms of cytokinins and could have an impact on seed growth. This is Cis-zeatin O-glucosyltransferase 2 from Zea mays (Maize).